Reading from the N-terminus, the 556-residue chain is Capsid vertex component 2 (556 aa).

Residues 1 to 54 (MWPVGSSYTRACSVQRWPKRCVYWAPSPQNVLEINPHRFQESRRSAALYRKHVV) form an interaction with major capsid protein/MCP region. The tract at residues 104 to 136 (QPASSNQGGARPQTDPHVPQPAPAIPSAPPKEN) is disordered. Residues 121–132 (VPQPAPAIPSAP) show a composition bias toward pro residues.

This sequence belongs to the herpesviridae CVC2 protein family. Heterodimerizes with CVC1. Interacts with major capsid protein/MCP and triplex capsid protein 1/TRX1 at the pentamer vertices. Interacts with the large tegument protein/LTP.

It localises to the virion. The protein resides in the host nucleus. Capsid vertex-specific component that plays a role during viral DNA encapsidation, assuring correct genome cleavage and presumably stabilizing capsids that contain full-length viral genomes. Participates in the interaction between the capsid and the tegument through interaction with the large tegument protein/LTP. The chain is Capsid vertex component 2 from Connochaetes taurinus (Blue wildebeest).